The sequence spans 711 residues: DNA ligase (711 aa).

The tract at residues 1 to 29 (MSEDAIGQQVPAAQEAAAGAEPNSAARER) is disordered. Positions 12–25 (AAQEAAAGAEPNSA) are enriched in low complexity. NAD(+)-binding positions include 54–58 (DAAFD), 103–104 (SL), and E133. K135 acts as the N6-AMP-lysine intermediate in catalysis. Positions 156, 197, 313, and 337 each coordinate NAD(+). Residues C431, C434, C450, and C456 each coordinate Zn(2+). In terms of domain architecture, BRCT spans 620 to 709 (QGPRPLEGVT…PEAARAVARV (90 aa)).

It belongs to the NAD-dependent DNA ligase family. LigA subfamily. It depends on Mg(2+) as a cofactor. Mn(2+) is required as a cofactor.

It carries out the reaction NAD(+) + (deoxyribonucleotide)n-3'-hydroxyl + 5'-phospho-(deoxyribonucleotide)m = (deoxyribonucleotide)n+m + AMP + beta-nicotinamide D-nucleotide.. Its function is as follows. DNA ligase that catalyzes the formation of phosphodiester linkages between 5'-phosphoryl and 3'-hydroxyl groups in double-stranded DNA using NAD as a coenzyme and as the energy source for the reaction. It is essential for DNA replication and repair of damaged DNA. The sequence is that of DNA ligase from Salinispora tropica (strain ATCC BAA-916 / DSM 44818 / JCM 13857 / NBRC 105044 / CNB-440).